Here is a 660-residue protein sequence, read N- to C-terminus: uncharacterized protein (660 aa).

The interval 1 to 660 is disordered; that stretch reads MGTPCQSARG…RNPGCPRTWR (660 aa). Gly residues predominate over residues 67-80; sequence RPGGGNRVGAGRGR. Polar residues predominate over residues 104–116; sequence SNPTGGCSDPQRS. A run of 4 repeats spans residues 149–273, 274–398, 399–523, and 524–648. Positions 149-648 are 4 X 125 AA tandem repeats; that stretch reads SARNPGCPRT…THRRPPGCPR (500 aa). Low complexity-rich tracts occupy residues 177-196, 302-321, 427-446, and 552-571; these read RPSG…GTPA.

This is an uncharacterized protein from Homo sapiens (Human).